Reading from the N-terminus, the 595-residue chain is E3 ubiquitin-protein ligase synoviolin B (595 aa).

A helical transmembrane segment spans residues Met1–Leu19. Topologically, residues Lys20–Pro35 are lumenal. Residues Ser36–Gly56 form a helical membrane-spanning segment. The Cytoplasmic segment spans residues Lys57–Asp92. Residues Phe93–Leu113 form a helical membrane-spanning segment. At Ala114 to Trp129 the chain is on the lumenal side. The chain crosses the membrane as a helical span at residues Leu130 to Val150. Topologically, residues Ser151–Ser163 are cytoplasmic. A helical membrane pass occupies residues Val164–Ile184. Over Lys185 to Val218 the chain is Lumenal. Residues Leu219 to Ile239 traverse the membrane as a helical segment. The interval Lys230 to Arg264 is interaction with p53/TP53. At Arg240 to Gln595 the chain is on the cytoplasmic side. Residues Cys285, Cys288, Cys301, His303, His306, Cys309, Cys320, and Cys323 each contribute to the Zn(2+) site. The RING-type; atypical zinc-finger motif lies at Cys285–Arg324. Over residues Gln335–Thr353 the composition is skewed to low complexity. 2 disordered regions span residues Gln335–Phe370 and Pro386–Ala426. Residues Pro354–Phe370 are compositionally biased toward pro residues. Over residues Ala390–Ser408 the composition is skewed to low complexity. A coiled-coil region spans residues Glu463–Met494. The segment at Pro509–Gln595 is disordered. A compositionally biased stretch (low complexity) spans Val514–Ser552.

The protein belongs to the HRD1 family. As to quaternary structure, homodimer.

The protein localises to the endoplasmic reticulum membrane. It catalyses the reaction S-ubiquitinyl-[E2 ubiquitin-conjugating enzyme]-L-cysteine + [acceptor protein]-L-lysine = [E2 ubiquitin-conjugating enzyme]-L-cysteine + N(6)-ubiquitinyl-[acceptor protein]-L-lysine.. It functions in the pathway protein modification; protein ubiquitination. E3 ubiquitin-protein ligase which accepts ubiquitin specifically from endoplasmic reticulum-associated UBC7 E2 ligase and transfers it to substrates, promoting their degradation. Component of the endoplasmic reticulum quality control (ERQC) system also called ER-associated degradation (ERAD) involved in ubiquitin-dependent degradation of misfolded endoplasmic reticulum proteins. Also promotes the degradation of normal but naturally short-lived proteins. Protects cells from ER stress-induced apoptosis. Sequesters p53 in the cytoplasm and promotes its degradation, thereby negatively regulating its biological function in transcription, cell cycle regulation and apoptosis. This chain is E3 ubiquitin-protein ligase synoviolin B (syvn1-b), found in Xenopus laevis (African clawed frog).